A 189-amino-acid chain; its full sequence is Nucleoside triphosphate pyrophosphatase (189 aa).

Catalysis depends on aspartate 70, which acts as the Proton acceptor.

It belongs to the Maf family. It depends on a divalent metal cation as a cofactor.

The protein localises to the cytoplasm. It carries out the reaction a ribonucleoside 5'-triphosphate + H2O = a ribonucleoside 5'-phosphate + diphosphate + H(+). It catalyses the reaction a 2'-deoxyribonucleoside 5'-triphosphate + H2O = a 2'-deoxyribonucleoside 5'-phosphate + diphosphate + H(+). In terms of biological role, nucleoside triphosphate pyrophosphatase. May have a dual role in cell division arrest and in preventing the incorporation of modified nucleotides into cellular nucleic acids. The polypeptide is Nucleoside triphosphate pyrophosphatase (Xylella fastidiosa (strain M23)).